A 494-amino-acid polypeptide reads, in one-letter code: MGNHLQISVSLVLCIFIQSSACGQGVGTEPFGRNLGATEERKPLQKPEIRFLLFKDESDRLGCQLRPQHPETLQECGFNSSHPLVMIIHGWSVDGLLETWIWKIVGALKSRQSQPVNVGLVDWISLAYQHYAIAVRNTRVVGQEVAALLLWLEESMKFSRSKVHLIGYSLGAHVSGFAGSSMGGKRKIGRITGLDPAGPMFEGTSPNERLSPDDANFVDAIHTFTREHMGLSVGIKQPIAHYDFYPNGGSFQPGCHFLELYKHIAEHGLNAITQTINCAHERSVHLFIDSLQHSNLQNTGFQCSNMDSFSQGLCLNCKKGRCNSLGYDIRRIGHVKSKTLFLITRAQSPFKVYHYQFKIQFINQMEKPMEPTFTMTLLGTKEEIKKIPITLGEGITSNKTYSLLITLNKDIGELIMLKFKWENSAVWANVWNTVQTIMLWDTEPHYAGLIVKTIWVKAGETQQRMTFCPDNVDDLQLHPTQEKVFVKCDLKSKD.

Residues 1 to 21 (MGNHLQISVSLVLCIFIQSSA) form the signal peptide. Asn-79 carries N-linked (GlcNAc...) asparagine glycosylation. Ser-169 serves as the catalytic Nucleophile. The active-site Charge relay system is Asp-195. The interval 255-278 (CHFLELYKHIAEHGLNAITQTINC) is essential for determining substrate specificity. The active-site Charge relay system is His-280. The 135-residue stretch at 353 to 487 (YHYQFKIQFI…HPTQEKVFVK (135 aa)) folds into the PLAT domain. Asn-398 is a glycosylation site (N-linked (GlcNAc...) asparagine).

Belongs to the AB hydrolase superfamily. Lipase family. As to quaternary structure, homodimer.

The protein localises to the secreted. The catalysed reaction is a triacylglycerol + H2O = a diacylglycerol + a fatty acid + H(+). It carries out the reaction a 1-acyl-sn-glycero-3-phosphocholine + H2O = sn-glycerol 3-phosphocholine + a fatty acid + H(+). It catalyses the reaction a 1,2-diacyl-sn-glycero-3-phosphocholine + H2O = a 2-acyl-sn-glycero-3-phosphocholine + a fatty acid + H(+). The enzyme catalyses 1,2-di-(9Z-octadecenoyl)-sn-glycerol + H2O = 2-(9Z-octadecenoyl)-glycerol + (9Z)-octadecenoate + H(+). The catalysed reaction is 1,2,3-tri-(9Z-octadecenoyl)-glycerol + H2O = 2,3-di-(9Z)-octadecenoyl-sn-glycerol + (9Z)-octadecenoate + H(+). It carries out the reaction 1-(9Z-octadecenoyl)-sn-glycero-3-phospho-L-serine + H2O = sn-glycero-3-phospho-L-serine + (9Z)-octadecenoate + H(+). It catalyses the reaction 1-hexadecanoyl-sn-glycero-3-phosphocholine + H2O = sn-glycerol 3-phosphocholine + hexadecanoate + H(+). The enzyme catalyses 1,3-di-(9Z-octadecenoyl)-glycerol + H2O = 3-(9Z-octadecenoyl)-sn-glycerol + (9Z)-octadecenoate + H(+). The catalysed reaction is 1,2,3-tri-(9Z-octadecenoyl)-glycerol + H2O = di-(9Z)-octadecenoylglycerol + (9Z)-octadecenoate + H(+). It carries out the reaction 1,2-di-(9Z-octadecenoyl)-sn-glycero-3-phosphocholine + H2O = (9Z-octadecenoyl)-sn-glycero-3-phosphocholine + (9Z)-octadecenoate + H(+). It catalyses the reaction 1,2,3-tributanoylglycerol + H2O = dibutanoylglycerol + butanoate + H(+). The enzyme catalyses 1,2-dihexadecanoyl-sn-glycero-3-phosphocholine + H2O = hexadecanoyl-sn-glycero-3-phosphocholine + hexadecanoate + H(+). Its activity is regulated as follows. Phospholipase A1 and lysophospholipase activities are inhibited by annexin II. Catalyzes the hydrolysis of triglycerides and phospholipids present in circulating plasma lipoproteins, including chylomicrons, intermediate density lipoproteins (IDL), low density lipoproteins (LDL) of large size and high density lipoproteins (HDL), releasing free fatty acids (FFA) and smaller lipoprotein particles. Also exhibits lysophospholipase activity. Can hydrolyze both neutral lipid and phospholipid substrates but shows a greater binding affinity for neutral lipid substrates than phospholipid substrates. In native LDL, preferentially hydrolyzes the phosphatidylcholine species containing polyunsaturated fatty acids at sn-2 position. The polypeptide is Hepatic triacylglycerol lipase (Lipc) (Rattus norvegicus (Rat)).